The chain runs to 306 residues: MRKKTVQIMISHSLMIGLWASAFPGIRAGLEGYTPEHLALFRLLIGSMALLLFAVLTQMRLPDLKDIPAIFLLGFLGFAFYHILLNIGEKTVSAGVASLLVTTAPIFSAMLSRLFYKEHFGFTKWLGSMISLLGVLLIAFGAGDFTYSMSGILVILLAAFSESIYFVFQARYIKKYGFIPFVTFTIWGGTIPMLVFLPGLGEEMMNASISATLSIVYLGLLPTVIPYFALAYVTSFVGASEATLSLYVTPALALIISWLWIGEIPTLLSLLGGVVTVGGVCFTYLKVNKMNKIFITHFSAKRVKKL.

Transmembrane regions (helical) follow at residues 6 to 26, 37 to 57, 67 to 87, 91 to 111, 125 to 145, 148 to 168, 177 to 197, 213 to 233, and 251 to 271; these read VQIM…FPGI, HLAL…AVLT, IPAI…LLNI, TVSA…SAML, WLGS…AGDF, SMSG…YFVF, GFIP…LVFL, LSIV…LAYV, and ALAL…LSLL. 2 EamA domains span residues 17–140 and 160–285; these read GLWA…LIAF and FSES…FTYL.

It belongs to the EamA transporter family.

The protein localises to the cell membrane. This is an uncharacterized protein from Bacillus subtilis (strain 168).